The sequence spans 1315 residues: Tetratricopeptide repeat protein 21B (1315 aa).

19 TPR repeats span residues arginine 108–serine 141, proline 145–isoleucine 178, glutamine 192–leucine 225, alanine 285–glutamine 323, alanine 324–asparagine 357, proline 492–tyrosine 525, proline 563–arginine 596, leucine 616–threonine 649, proline 721–aspartate 754, threonine 756–asparagine 788, leucine 790–serine 821, glycine 830–isoleucine 863, alanine 883–aspartate 916, lysine 918–asparagine 950, glutamate 951–asparagine 984, proline 1022–glycine 1055, glutamate 1196–cysteine 1229, lysine 1231–threonine 1263, and proline 1265–tyrosine 1298.

Belongs to the TTC21 family. In terms of assembly, component of the IFT complex A (IFT-A) complex. IFT-A complex is divided into a core subcomplex composed of IFT122:IFT140:WDR19 which is associated with TULP3 and a peripheral subcomplex composed of IFT43:WDR35:TTC21B. Interacts directy with WDR35 and TTC21B. Interacts with TTC25.

The protein resides in the cytoplasm. It is found in the cytoskeleton. Its subcellular location is the cilium axoneme. In terms of biological role, component of the IFT complex A (IFT-A), a complex required for retrograde ciliary transport and entry into cilia of G protein-coupled receptors (GPCRs). Essential for retrograde trafficking of IFT-1, IFT-B and GPCRs. Negatively modulates the SHH signal transduction. This chain is Tetratricopeptide repeat protein 21B (Ttc21b), found in Mus musculus (Mouse).